The primary structure comprises 521 residues: 2,3-bisphosphoglycerate-independent phosphoglycerate mutase (521 aa).

Residues aspartate 18 and serine 68 each contribute to the Mn(2+) site. Catalysis depends on serine 68, which acts as the Phosphoserine intermediate. Substrate contacts are provided by residues histidine 129, 158–159 (RD), arginine 190, arginine 196, 266–269 (RSDR), and lysine 343. The Mn(2+) site is built by aspartate 410, histidine 414, aspartate 451, histidine 452, and histidine 470.

This sequence belongs to the BPG-independent phosphoglycerate mutase family. As to quaternary structure, monomer. Mn(2+) serves as cofactor.

The enzyme catalyses (2R)-2-phosphoglycerate = (2R)-3-phosphoglycerate. The protein operates within carbohydrate degradation; glycolysis; pyruvate from D-glyceraldehyde 3-phosphate: step 3/5. In terms of biological role, catalyzes the interconversion of 2-phosphoglycerate and 3-phosphoglycerate. The sequence is that of 2,3-bisphosphoglycerate-independent phosphoglycerate mutase from Hydrogenovibrio crunogenus (strain DSM 25203 / XCL-2) (Thiomicrospira crunogena).